A 614-amino-acid polypeptide reads, in one-letter code: Dihydroxy-acid dehydratase (614 aa).

Position 81 (D81) interacts with Mg(2+). A [2Fe-2S] cluster-binding site is contributed by C122. D123 and K124 together coordinate Mg(2+). K124 is modified (N6-carboxylysine). C196 serves as a coordination point for [2Fe-2S] cluster. E492 is a binding site for Mg(2+). The active-site Proton acceptor is S518.

It belongs to the IlvD/Edd family. In terms of assembly, homodimer. [2Fe-2S] cluster is required as a cofactor. Requires Mg(2+) as cofactor.

The enzyme catalyses (2R)-2,3-dihydroxy-3-methylbutanoate = 3-methyl-2-oxobutanoate + H2O. It catalyses the reaction (2R,3R)-2,3-dihydroxy-3-methylpentanoate = (S)-3-methyl-2-oxopentanoate + H2O. It participates in amino-acid biosynthesis; L-isoleucine biosynthesis; L-isoleucine from 2-oxobutanoate: step 3/4. It functions in the pathway amino-acid biosynthesis; L-valine biosynthesis; L-valine from pyruvate: step 3/4. Its function is as follows. Functions in the biosynthesis of branched-chain amino acids. Catalyzes the dehydration of (2R,3R)-2,3-dihydroxy-3-methylpentanoate (2,3-dihydroxy-3-methylvalerate) into 2-oxo-3-methylpentanoate (2-oxo-3-methylvalerate) and of (2R)-2,3-dihydroxy-3-methylbutanoate (2,3-dihydroxyisovalerate) into 2-oxo-3-methylbutanoate (2-oxoisovalerate), the penultimate precursor to L-isoleucine and L-valine, respectively. The protein is Dihydroxy-acid dehydratase of Ruegeria sp. (strain TM1040) (Silicibacter sp.).